An 867-amino-acid polypeptide reads, in one-letter code: Xylosyltransferase 2 (867 aa).

Topologically, residues 1–15 (MVASARVQKLVRRYK) are cytoplasmic. Residues 16–36 (LAIATALAILLLQGLVVWSFS) traverse the membrane as a helical; Signal-anchor for type II membrane protein segment. The Lumenal segment spans residues 37 to 867 (VLEDDEPGEK…GPVKADGRLR (831 aa)). The disordered stretch occupies residues 41-122 (DEPGEKGRQK…PPPEAPGRQN (82 aa)). Basic and acidic residues predominate over residues 53-65 (RPLDPSEGSKDTD). Positions 73–82 (SAGRRHGRWR) are enriched in basic residues. Residue asparagine 122 is glycosylated (N-linked (GlcNAc...) asparagine). 2 disulfide bridges follow: cysteine 161/cysteine 189 and cysteine 205/cysteine 447. UDP-alpha-D-xylose is bound by residues valine 238, aspartate 266, and 295 to 297 (TIW). Asparagine 326 carries an N-linked (GlcNAc...) asparagine glycan. Residues 399–400 (DW), serine 480, and 503–504 (RK) each bind UDP-alpha-D-xylose. 2 disulfides stabilise this stretch: cysteine 580–cysteine 835 and cysteine 828–cysteine 841. Asparagine 685 carries N-linked (GlcNAc...) asparagine glycosylation.

This sequence belongs to the glycosyltransferase 14 family. XylT subfamily. In terms of assembly, monomer. It depends on Mg(2+) as a cofactor. Requires Mn(2+) as cofactor. Contains disulfide bonds.

The protein localises to the golgi apparatus membrane. The protein resides in the secreted. It carries out the reaction UDP-alpha-D-xylose + L-seryl-[protein] = 3-O-(beta-D-xylosyl)-L-seryl-[protein] + UDP + H(+). The protein operates within glycan metabolism; chondroitin sulfate biosynthesis. It functions in the pathway glycan metabolism; heparan sulfate biosynthesis. In terms of biological role, catalyzes the first step in the biosynthesis of chondroitin sulfate, heparan sulfate and dermatan sulfate proteoglycans, such as DCN. Transfers D-xylose from UDP-D-xylose to specific serine residues of the core protein. This chain is Xylosyltransferase 2 (XYLT2), found in Bos taurus (Bovine).